Reading from the N-terminus, the 278-residue chain is Tryptophan synthase alpha chain (278 aa).

Active-site proton acceptor residues include Glu-49 and Asp-60.

It belongs to the TrpA family. Tetramer of two alpha and two beta chains.

It catalyses the reaction (1S,2R)-1-C-(indol-3-yl)glycerol 3-phosphate + L-serine = D-glyceraldehyde 3-phosphate + L-tryptophan + H2O. It functions in the pathway amino-acid biosynthesis; L-tryptophan biosynthesis; L-tryptophan from chorismate: step 5/5. Functionally, the alpha subunit is responsible for the aldol cleavage of indoleglycerol phosphate to indole and glyceraldehyde 3-phosphate. This is Tryptophan synthase alpha chain from Granulibacter bethesdensis (strain ATCC BAA-1260 / CGDNIH1).